The following is a 585-amino-acid chain: QTTEILLCLSPVEVANLKEGINFFRNKSTGKDYILYKNKSRLRACKNMCKHQGGLFIKDIEDLAGRSVRCTKHNWKLDVSTMKYINPPESFCQDELVVEMDENNRLLLLELNPPNPWDLQPRSPEELAFGEVQITYLTHACMDLKLGDKRMVFDPWLIGPAFARGWWLLHEPPSDWLERLCQADLIYISHLHSDHLSYPTLKKLAGRRPDIPIYVGNTERPVFWNLNQSGVQLTNINIVPFGIWQQVDKNLRFMILMDGVHPEMDTCIIVEYKGHKILNTVDCTRPNGGRLPMKVALMMSDFAGGASGFPMTFSGGKFTEEWKAQFIKTERKKLLNYKAQLVKNLQPRIYCPFAGYFVESHPSDKYIKETNTKNDPNELNNLIKKNSDVITWTPRPGATLDLARMLKDPTDSKGIVEPPEGTKIYKDSWDFEPYLEILNAAVGDEIFLHSSWIKEYFTWAGFKDYNLVVRMIETDEDFNPFPGGYDYLVDFLDLSFPKERPQREHPYEEIHSRVDVIRHVVKNGLLWDELYIGFQTRLQRDPDIYHHLFWNHFQIKLPLMPPNWKSFLMCCEQNEPGILQECTTT.

Residues 9 to 107 (LSPVEVANLK…VEMDENNRLL (99 aa)) form the Rieske domain. Residues Cys-49, His-51, Cys-70, and His-73 each coordinate [2Fe-2S] cluster.

This sequence belongs to the CMP-Neu5Ac hydroxylase family. The cofactor is [2Fe-2S] cluster.

It is found in the cytoplasm. It carries out the reaction CMP-N-acetyl-beta-neuraminate + 2 Fe(II)-[cytochrome b5] + O2 + 2 H(+) = CMP-N-glycoloyl-beta-neuraminate + 2 Fe(III)-[cytochrome b5] + H2O. It functions in the pathway amino-sugar metabolism; N-acetylneuraminate metabolism. Sialic acids are components of carbohydrate chains of glycoconjugates and are involved in cell-cell recognition and cell-pathogen interactions. Catalyzes the conversion of CMP-N-acetylneuraminic acid (CMP-Neu5Ac) into its hydroxylated derivative CMP-N-glycolylneuraminic acid (CMP-Neu5Gc), a sialic acid abundantly expressed at the surface of many cells. The protein is Cytidine monophosphate-N-acetylneuraminic acid hydroxylase (CMAH) of Pongo pygmaeus (Bornean orangutan).